A 634-amino-acid chain; its full sequence is Mediator of RNA polymerase II transcription subunit 17 (634 aa).

2 disordered regions span residues 51–73 and 606–626; these read DKHKDPWAEDEESDGQSAADVDT and DEKASRAQSWKPDSTTPGSPG. Polar residues predominate over residues 611-623; sequence RAQSWKPDSTTPG.

The protein belongs to the Mediator complex subunit 17 family. In terms of assembly, component of the Mediator complex.

It localises to the nucleus. Its function is as follows. Component of the Mediator complex, a coactivator involved in the regulated transcription of nearly all RNA polymerase II-dependent genes. Mediator functions as a bridge to convey information from gene-specific regulatory proteins to the basal RNA polymerase II transcription machinery. Mediator is recruited to promoters by direct interactions with regulatory proteins and serves as a scaffold for the assembly of a functional preinitiation complex with RNA polymerase II and the general transcription factors. This Aspergillus terreus (strain NIH 2624 / FGSC A1156) protein is Mediator of RNA polymerase II transcription subunit 17 (srb4).